Reading from the N-terminus, the 326-residue chain is L-carnitine dehydrogenase (326 aa).

19 to 24 (GTGVIG) lines the NAD(+) pocket.

Belongs to the 3-hydroxyacyl-CoA dehydrogenase family. L-carnitine dehydrogenase subfamily. As to quaternary structure, homodimer.

It is found in the cytoplasm. It carries out the reaction carnitine + NAD(+) = 3-dehydrocarnitine + NADH + H(+). It functions in the pathway amine and polyamine metabolism; carnitine metabolism. Its function is as follows. Catalyzes the NAD(+)-dependent oxidation of L-carnitine to 3-dehydrocarnitine. This is L-carnitine dehydrogenase from Bacillus cereus (strain ZK / E33L).